The chain runs to 303 residues: Protein bottleneck (303 aa).

Disordered stretches follow at residues 102–142 and 185–272; these read SKRN…PTVT and VATT…ASVR. Composition is skewed to low complexity over residues 115-138 and 185-197; these read RQQEQRQPQEQPLQQEELQHQQQE and VATTTANSSTANS. Positions 260–272 are enriched in polar residues; that stretch reads ATISRQSSSASVR.

As to expression, restricted to the blastoderm.

It localises to the cytoplasm. Its subcellular location is the cytoskeleton. Acts as a regulator of the microfilament network governing cellularization of the embryo. Determines the timing of a key conformational transition in the cortical microfilament network: the proper coordination of membrane invagination and basal closure of the cells. To do this, bnk possibly physically links neighboring contractile units of the early cycle 14 microfilament network in a manner that prevents basal constriction until the proper stage has been reached. Bnk together with nullo and Sry-alpha may provide auxiliary functions, by acting both to stabilize a large and dynamic microfilament structure and regulate its functions. The sequence is that of Protein bottleneck (bnk) from Drosophila melanogaster (Fruit fly).